The sequence spans 655 residues: SRSF protein kinase 1 (655 aa).

Residues 1–57 (MERKVLALQARKKRTKAKKDKAQRKSETQHRGSAPHSESDLPEQEEEILGSDDDEQE) form a disordered region. Residues 10–22 (ARKKRTKAKKDKA) are compositionally biased toward basic residues. A compositionally biased stretch (acidic residues) spans 40-57 (DLPEQEEEILGSDDDEQE). At Ser51 the chain carries Phosphoserine; by CK2. The region spanning 80-653 (YHVIRKLGWG…AAECLRHPWL (574 aa)) is the Protein kinase domain. ATP-binding positions include 86–94 (LGWGHFSTV), Lys109, and 166–168 (EVL). Catalysis depends on Asp213, which acts as the Proton acceptor. Disordered regions lie at residues 238–341 (WQRS…QDQT) and 397–417 (FLSS…CTPI). Basic residues predominate over residues 265 to 276 (KNKKKKLKKKQK). 2 stretches are compositionally biased toward basic and acidic residues: residues 277-288 (RQAELLEKRMQE) and 304-318 (NKQE…RPLK). Phosphoserine occurs at positions 309, 311, and 333. Ser555 is modified (phosphoserine; by CK2).

It belongs to the protein kinase superfamily. CMGC Ser/Thr protein kinase family. In terms of assembly, monomer. Isoform 2 is found in a multisubunit complex containing seven proteins, named toposome, which separates entangled circular chromatin DNA during chromosome segregation. Isoform 2 interacts with DNAJC8 and AHSA1/AHA1 and this mediates formation of a complex with the Hsp70 /Hsp90 machinery. Isoform 1 is found in a complex with: DHX9, MOV10, MATR3, HNRNPU, NCL, DDX21, HSD17B4, PABPC1, HNRNPM, IGF2BP1, SYNCRIP, RPL3, VIM, YBX1, NPM1, HNRNPA2B1, HNRNPC, RPLP0, RPL7A and RALY. Isoform 2 binds to IGF2BP1, SYNCRIP, HNRNPA2B1 and HNRNPC. Isoform 1 and isoform 2 interact with SAFB which inhibits its activity. Isoform 2 interacts with SAFB2 which inhibits its activity. As to quaternary structure, (Microbial infection) Isoform 2 interacts with HHV-1 ICP27 protein. Requires Mg(2+) as cofactor. As to expression, isoform 2 is predominantly expressed in the testis but is also present at lower levels in heart, ovary, small intestine, liver, kidney, pancreas and skeletal muscle. Isoform 1 is only seen in the testis, at lower levels than isoform 2. Highly expressed in different erythroid and lymphoid cell lines, with isoform 2 being far more abundant than isoform 1.

It is found in the cytoplasm. The protein localises to the nucleus. It localises to the nucleus matrix. The protein resides in the microsome. Its subcellular location is the nucleoplasm. It is found in the nucleus speckle. The protein localises to the chromosome. The catalysed reaction is L-seryl-[protein] + ATP = O-phospho-L-seryl-[protein] + ADP + H(+). It carries out the reaction L-threonyl-[protein] + ATP = O-phospho-L-threonyl-[protein] + ADP + H(+). Activated by phosphorylation on Ser-51 and Ser-555. Its function is as follows. Serine/arginine-rich protein-specific kinase which specifically phosphorylates its substrates at serine residues located in regions rich in arginine/serine dipeptides, known as RS domains and is involved in the phosphorylation of SR splicing factors and the regulation of splicing. Plays a central role in the regulatory network for splicing, controlling the intranuclear distribution of splicing factors in interphase cells and the reorganization of nuclear speckles during mitosis. Can influence additional steps of mRNA maturation, as well as other cellular activities, such as chromatin reorganization in somatic and sperm cells and cell cycle progression. Isoform 2 phosphorylates SFRS2, ZRSR2, LBR and PRM1. Isoform 2 phosphorylates SRSF1 using a directional (C-terminal to N-terminal) and a dual-track mechanism incorporating both processive phosphorylation (in which the kinase stays attached to the substrate after each round of phosphorylation) and distributive phosphorylation steps (in which the kinase and substrate dissociate after each phosphorylation event). The RS domain of SRSF1 binds first to a docking groove in the large lobe of the kinase domain of SRPK1. This induces certain structural changes in SRPK1 and/or RRM2 domain of SRSF1, allowing RRM2 to bind the kinase and initiate phosphorylation. The cycles continue for several phosphorylation steps in a processive manner (steps 1-8) until the last few phosphorylation steps (approximately steps 9-12). During that time, a mechanical stress induces the unfolding of the beta-4 motif in RRM2, which then docks at the docking groove of SRPK1. This also signals RRM2 to begin to dissociate, which facilitates SRSF1 dissociation after phosphorylation is completed. Isoform 2 can mediate hepatitis B virus (HBV) core protein phosphorylation. It plays a negative role in the regulation of HBV replication through a mechanism not involving the phosphorylation of the core protein but by reducing the packaging efficiency of the pregenomic RNA (pgRNA) without affecting the formation of the viral core particles. Isoform 1 and isoform 2 can induce splicing of exon 10 in MAPT/TAU. The ratio of isoform 1/isoform 2 plays a decisive role in determining cell fate in K-562 leukaemic cell line: isoform 2 favors proliferation where as isoform 1 favors differentiation. The chain is SRSF protein kinase 1 from Homo sapiens (Human).